Here is a 125-residue protein sequence, read N- to C-terminus: MSKVQEVIDIVKQMTVLELSELVKALEEEFGVSAAAPVAVAAAPAAGAVAEAVEEQYEFDVILTSSGEKKINVIKVVREITGLGLKEAKTLVDECPNPVKEKITKEEANEIKAKIEEAGGSVEVK.

The protein belongs to the bacterial ribosomal protein bL12 family. In terms of assembly, homodimer. Part of the ribosomal stalk of the 50S ribosomal subunit. Forms a multimeric L10(L12)X complex, where L10 forms an elongated spine to which 2 to 4 L12 dimers bind in a sequential fashion. Binds GTP-bound translation factors.

Its function is as follows. Forms part of the ribosomal stalk which helps the ribosome interact with GTP-bound translation factors. Is thus essential for accurate translation. This is Large ribosomal subunit protein bL12 from Syntrophomonas wolfei subsp. wolfei (strain DSM 2245B / Goettingen).